The sequence spans 147 residues: Transcriptional repressor NrdR (147 aa).

The segment at 3-34 is a zinc-finger region; sequence CPFCGHEDTQVAETRESDEGDVIRRRRRCPSC. An ATP-cone domain is found at 49-139; sequence PAIVKKDGSR…VYRSFEGVDE (91 aa).

The protein belongs to the NrdR family. Requires Zn(2+) as cofactor.

Functionally, negatively regulates transcription of bacterial ribonucleotide reductase nrd genes and operons by binding to NrdR-boxes. The polypeptide is Transcriptional repressor NrdR (Methylibium petroleiphilum (strain ATCC BAA-1232 / LMG 22953 / PM1)).